Consider the following 151-residue polypeptide: S-ribosylhomocysteine lyase (151 aa).

The Fe cation site is built by His54, His58, and Cys121.

The protein belongs to the LuxS family. In terms of assembly, homodimer. Fe cation serves as cofactor.

The enzyme catalyses S-(5-deoxy-D-ribos-5-yl)-L-homocysteine = (S)-4,5-dihydroxypentane-2,3-dione + L-homocysteine. Its function is as follows. Involved in the synthesis of autoinducer 2 (AI-2) which is secreted by bacteria and is used to communicate both the cell density and the metabolic potential of the environment. The regulation of gene expression in response to changes in cell density is called quorum sensing. Catalyzes the transformation of S-ribosylhomocysteine (RHC) to homocysteine (HC) and 4,5-dihydroxy-2,3-pentadione (DPD). The chain is S-ribosylhomocysteine lyase from Clostridium perfringens (strain ATCC 13124 / DSM 756 / JCM 1290 / NCIMB 6125 / NCTC 8237 / Type A).